The primary structure comprises 413 residues: Tyrosine--tRNA ligase (413 aa).

Tyr34 serves as a coordination point for L-tyrosine. The short motif at 39–48 is the 'HIGH' region element; sequence PTSHSLTVGH. L-tyrosine is bound by residues Tyr164 and Gln168. The 'KMSKS' region motif lies at 225–229; sequence KFGKS. Lys228 provides a ligand contact to ATP. An S4 RNA-binding domain is found at 347–413; that stretch reads ILLVDALVQT…GKKNNALIVF (67 aa).

Belongs to the class-I aminoacyl-tRNA synthetase family. TyrS type 1 subfamily. As to quaternary structure, homodimer.

The protein resides in the cytoplasm. The catalysed reaction is tRNA(Tyr) + L-tyrosine + ATP = L-tyrosyl-tRNA(Tyr) + AMP + diphosphate + H(+). Catalyzes the attachment of tyrosine to tRNA(Tyr) in a two-step reaction: tyrosine is first activated by ATP to form Tyr-AMP and then transferred to the acceptor end of tRNA(Tyr). The sequence is that of Tyrosine--tRNA ligase from Onion yellows phytoplasma (strain OY-M).